Here is a 496-residue protein sequence, read N- to C-terminus: Probable glycine betaine transporter (496 aa).

Transmembrane regions (helical) follow at residues 11–31 (TVLY…VFLP), 49–69 (FGWL…GIAI), 89–109 (FQWF…FWSV), 136–156 (VVFF…GLAL), 188–208 (AIDI…LGLG), 219–239 (IWGI…ITVI), 260–280 (VWLS…VFIL), 306–326 (WVGG…PFVG), 341–361 (FVFA…AIYG), 396–416 (LYAI…VGAA), 441–461 (FWGI…GTAA), and 468–488 (ASIA…YSIL).

This sequence belongs to the BCCT transporter (TC 2.A.15) family.

It is found in the cell membrane. Functionally, probably acts in the uptake of glycine betaine. May function in the pathway that allows anaerobic methylotrophic growth of D.hafniense using glycine betaine. This chain is Probable glycine betaine transporter, found in Desulfitobacterium hafniense (strain Y51).